Consider the following 344-residue polypeptide: Flavonoid 7-O-methyltransferase 1B (344 aa).

S-adenosyl-L-methionine is bound at residue aspartate 211. The active-site Proton acceptor is the histidine 249.

The protein belongs to the class I-like SAM-binding methyltransferase superfamily. Cation-independent O-methyltransferase family. Homodimer.

It catalyses the reaction scutellarein + S-adenosyl-L-methionine = scutellarein 7-methyl ether + S-adenosyl-L-homocysteine. The enzyme catalyses 4',7,8-trihydroxyflavone + S-adenosyl-L-methionine = 4',8-dihydroxy-7-methoxyflavone + S-adenosyl-L-homocysteine. The catalysed reaction is isorhamnetin + S-adenosyl-L-methionine = rhamnacene + S-adenosyl-L-homocysteine + H(+). It carries out the reaction kaempferol + S-adenosyl-L-methionine = kaempferol 7-methyl ether + S-adenosyl-L-homocysteine + H(+). It catalyses the reaction (2S)-naringenin + S-adenosyl-L-methionine = (2S)-sakuranetin + S-adenosyl-L-homocysteine + H(+). The enzyme catalyses quercetin + S-adenosyl-L-methionine = rhamnetin + S-adenosyl-L-homocysteine + H(+). The catalysed reaction is apigenin + S-adenosyl-L-methionine = genkwanin + S-adenosyl-L-homocysteine + H(+). It carries out the reaction luteolin + S-adenosyl-L-methionine = luteolin 7-methyl ether + S-adenosyl-L-homocysteine + H(+). It functions in the pathway flavonoid metabolism. In terms of biological role, flavonoid 7-O-methyltransferase involved in the biosynthesis of polymethoxylated flavonoids natural products such as pebrellin, aroma compounds which contribute to the flavor of peppermint, and exhibit pharmacological activities such as anti-allergic, anti-oxidant, antibacterial, anti-proliferative, and anti-inflammatory effects. Catalyzes S-adenosylmethionine-dependent regioselective 7-O-methylation of flavonoids; active on various hydroxylated flavonoid substrates, including luteolin (LUT), quercetin, kaempferol, isorhamnetin, apigenin (API), scutellarein (6-hydroxy-apigenin, 6-OH-API, SCU), 7,8,4'-trihydroxy-flavone and naringenin (NAR), and, with a lower efficiency, 7,8,3',4'-tetrahydroxy-flavone, taxifolin and hesperetin. The chain is Flavonoid 7-O-methyltransferase 1B from Mentha piperita (Peppermint).